Reading from the N-terminus, the 504-residue chain is Histidine ammonia-lyase (504 aa).

The segment at residues 141-143 (ASG) is a cross-link (5-imidazolinone (Ala-Gly)). 2,3-didehydroalanine (Ser) is present on Ser142.

Belongs to the PAL/histidase family. Post-translationally, contains an active site 4-methylidene-imidazol-5-one (MIO), which is formed autocatalytically by cyclization and dehydration of residues Ala-Ser-Gly.

It localises to the cytoplasm. It catalyses the reaction L-histidine = trans-urocanate + NH4(+). It functions in the pathway amino-acid degradation; L-histidine degradation into L-glutamate; N-formimidoyl-L-glutamate from L-histidine: step 1/3. The polypeptide is Histidine ammonia-lyase (Geobacillus kaustophilus (strain HTA426)).